The sequence spans 450 residues: Bifunctional protein GlmU (450 aa).

Positions 1–229 (MGVALIVLAA…EAETLGINTR (229 aa)) are pyrophosphorylase. Residues 8 to 11 (LAAG), K22, Q75, 80 to 81 (GT), 103 to 105 (YGD), G141, E155, N170, and N227 contribute to the UDP-N-acetyl-alpha-D-glucosamine site. D105 contacts Mg(2+). Residue N227 coordinates Mg(2+). The linker stretch occupies residues 230 to 250 (TELAAAEQAFQARARARALED). The tract at residues 251–450 (GVTLADPATT…RARKSAKGAQ (200 aa)) is N-acetyltransferase. UDP-N-acetyl-alpha-D-glucosamine-binding residues include R316 and K334. Catalysis depends on H346, which acts as the Proton acceptor. UDP-N-acetyl-alpha-D-glucosamine-binding residues include Y349 and N360. Residues A363, 369 to 370 (NY), S388, T406, and R423 contribute to the acetyl-CoA site.

It in the N-terminal section; belongs to the N-acetylglucosamine-1-phosphate uridyltransferase family. In the C-terminal section; belongs to the transferase hexapeptide repeat family. As to quaternary structure, homotrimer. It depends on Mg(2+) as a cofactor.

The protein localises to the cytoplasm. It carries out the reaction alpha-D-glucosamine 1-phosphate + acetyl-CoA = N-acetyl-alpha-D-glucosamine 1-phosphate + CoA + H(+). The catalysed reaction is N-acetyl-alpha-D-glucosamine 1-phosphate + UTP + H(+) = UDP-N-acetyl-alpha-D-glucosamine + diphosphate. The protein operates within nucleotide-sugar biosynthesis; UDP-N-acetyl-alpha-D-glucosamine biosynthesis; N-acetyl-alpha-D-glucosamine 1-phosphate from alpha-D-glucosamine 6-phosphate (route II): step 2/2. It participates in nucleotide-sugar biosynthesis; UDP-N-acetyl-alpha-D-glucosamine biosynthesis; UDP-N-acetyl-alpha-D-glucosamine from N-acetyl-alpha-D-glucosamine 1-phosphate: step 1/1. It functions in the pathway bacterial outer membrane biogenesis; LPS lipid A biosynthesis. In terms of biological role, catalyzes the last two sequential reactions in the de novo biosynthetic pathway for UDP-N-acetylglucosamine (UDP-GlcNAc). The C-terminal domain catalyzes the transfer of acetyl group from acetyl coenzyme A to glucosamine-1-phosphate (GlcN-1-P) to produce N-acetylglucosamine-1-phosphate (GlcNAc-1-P), which is converted into UDP-GlcNAc by the transfer of uridine 5-monophosphate (from uridine 5-triphosphate), a reaction catalyzed by the N-terminal domain. This is Bifunctional protein GlmU from Dinoroseobacter shibae (strain DSM 16493 / NCIMB 14021 / DFL 12).